Reading from the N-terminus, the 973-residue chain is Sensor histidine kinase TmoS (973 aa).

One can recognise a PAS 1 domain in the interval 32-103 (REELARIIFD…NQKRLVEAAS (72 aa)). A PAC 1 domain is found at 108-162 (VRCDIEILGKSGGREVIAVDFSLLPIRDEQENIVFLLAEGRNITDKKKAEAMLAL). The region spanning 187–405 (KVSHELRTPL…LFQVKLPLNA (219 aa)) is the Histidine kinase 1 domain. His-190 carries the post-translational modification Phosphohistidine; by autocatalysis. The Response regulatory domain occupies 452-567 (RVLIVEDNPD…ELRARVSNLI (116 aa)). Asp-500 is subject to 4-aspartylphosphate. Residues 611 to 681 (SEARWKAVYE…QRLARLLQSG (71 aa)) enclose the PAS 2 domain. Residues 685 to 737 (YSVECSYLCKNGSTIWANASVSLMSPRVDEPQVILQIIDDITEKKQAQETLNQ) enclose the PAC 2 domain. In terms of domain architecture, Histidine kinase 2 spans 757-973 (YIAHEINQPL…ACFFVSIPVS (217 aa)). Position 760 is a phosphohistidine (His-760).

In terms of processing, autophosphorylated. Activation requires a sequential transfer of a phosphate group from a His in the primary transmitter domain, to an Asp in the receiver domain and to a His in the secondary transmitter domain.

It localises to the cytoplasm. The catalysed reaction is ATP + protein L-histidine = ADP + protein N-phospho-L-histidine.. With respect to regulation, activity is regulated by agonists and antagonists. Binding of agonists such as toluene or benzene to TmoS stimulates autophosphorylation. Toluene causes the most pronounced increase, followed by benzene, chlorobenzene and ethylbenzene. Activity is inhibited by antagonists such as o-xylene, o-chlorotoluene and trimethylbenzene isomers, which bind to TmoS but do not stimulate autophosphorylation. Functionally, member of the two-component regulatory system TmoS/TmoT involved in the regulation of toluene degradation. Probably phosphorylates TmoT via a four-step phosphorelay in response to toluene. Can also be induced by benzene and ethylbenzene. In Ectopseudomonas mendocina (Pseudomonas mendocina), this protein is Sensor histidine kinase TmoS (tmoS).